The primary structure comprises 462 residues: tRNA(Ile)-lysidine synthase (462 aa).

27–32 (SGGPDS) is a binding site for ATP.

Belongs to the tRNA(Ile)-lysidine synthase family.

The protein localises to the cytoplasm. The catalysed reaction is cytidine(34) in tRNA(Ile2) + L-lysine + ATP = lysidine(34) in tRNA(Ile2) + AMP + diphosphate + H(+). Its function is as follows. Ligates lysine onto the cytidine present at position 34 of the AUA codon-specific tRNA(Ile) that contains the anticodon CAU, in an ATP-dependent manner. Cytidine is converted to lysidine, thus changing the amino acid specificity of the tRNA from methionine to isoleucine. The chain is tRNA(Ile)-lysidine synthase from Clostridioides difficile (strain 630) (Peptoclostridium difficile).